The following is a 447-amino-acid chain: N-succinylarginine dihydrolase (447 aa).

Substrate-binding positions include 19–28 (AGLSFGNEAS), Asn-110, and 137–138 (HR). Residue Glu-174 is part of the active site. A substrate-binding site is contributed by Arg-212. His-248 is an active-site residue. Residues Asp-250 and Asn-359 each contribute to the substrate site. Catalysis depends on Cys-365, which acts as the Nucleophile.

Belongs to the succinylarginine dihydrolase family. As to quaternary structure, homodimer.

It carries out the reaction N(2)-succinyl-L-arginine + 2 H2O + 2 H(+) = N(2)-succinyl-L-ornithine + 2 NH4(+) + CO2. It participates in amino-acid degradation; L-arginine degradation via AST pathway; L-glutamate and succinate from L-arginine: step 2/5. Functionally, catalyzes the hydrolysis of N(2)-succinylarginine into N(2)-succinylornithine, ammonia and CO(2). In Salmonella paratyphi A (strain ATCC 9150 / SARB42), this protein is N-succinylarginine dihydrolase.